The following is a 530-amino-acid chain: C2H2-type transcription factor MSN2 (530 aa).

C2H2-type zinc fingers lie at residues 409–437 (FVCD…QEKP) and 438–465 (FECN…SGGA).

The protein localises to the nucleus. Its subcellular location is the cytoplasm. Functionally, transcription factor that acts as a key downstream transcription factor in the HOG1-MAPK pathway. Plays crucial roles in the regulation of dimorphism transition, aggravated pigmentation, conidiation, microsclerotia formation and subsequent virulence towards Spodoptera litura larvae. More specifically regulates the expression of genes involved in antioxidation, pigment biosynthesis and ion transport and storage. The polypeptide is C2H2-type transcription factor MSN2 (Metarhizium rileyi (strain RCEF 4871) (Nomuraea rileyi)).